A 220-amino-acid polypeptide reads, in one-letter code: Ribosomal RNA small subunit methyltransferase G (220 aa).

S-adenosyl-L-methionine is bound by residues Gly-82, Leu-87, 137–138, and Arg-152; that span reads VE.

It belongs to the methyltransferase superfamily. RNA methyltransferase RsmG family.

The protein localises to the cytoplasm. It carries out the reaction guanosine(527) in 16S rRNA + S-adenosyl-L-methionine = N(7)-methylguanosine(527) in 16S rRNA + S-adenosyl-L-homocysteine. Its function is as follows. Specifically methylates the N7 position of guanine in position 527 of 16S rRNA. This chain is Ribosomal RNA small subunit methyltransferase G, found in Janthinobacterium sp. (strain Marseille) (Minibacterium massiliensis).